The chain runs to 416 residues: Glutamyl-tRNA reductase (416 aa).

Residues 50-53 (TCNR), Ser-109, 114-116 (EPQ), and Gln-120 each bind substrate. Cys-51 serves as the catalytic Nucleophile. Residue 189-194 (GAGEMI) coordinates NADP(+).

It belongs to the glutamyl-tRNA reductase family. Homodimer.

The enzyme catalyses (S)-4-amino-5-oxopentanoate + tRNA(Glu) + NADP(+) = L-glutamyl-tRNA(Glu) + NADPH + H(+). It functions in the pathway porphyrin-containing compound metabolism; protoporphyrin-IX biosynthesis; 5-aminolevulinate from L-glutamyl-tRNA(Glu): step 1/2. In terms of biological role, catalyzes the NADPH-dependent reduction of glutamyl-tRNA(Glu) to glutamate 1-semialdehyde (GSA). This is Glutamyl-tRNA reductase from Vesicomyosocius okutanii subsp. Calyptogena okutanii (strain HA).